Here is a 68-residue protein sequence, read N- to C-terminus: Putative alpha-conotoxin Qc alphaL-1 (68 aa).

The first 21 residues, 1–21 (MGMRMMFTMFLLVVLATTVVS), serve as a signal peptide directing secretion. The propeptide occupies 22-49 (INLDHAFDGRNAAANNKATDLMARTVRR). A disulfide bridge links Cys-51 with Cys-64.

Belongs to the conotoxin A superfamily. Expressed by the venom duct.

It is found in the secreted. Its function is as follows. Alpha-conotoxins act on postsynaptic membranes, they bind to the nicotinic acetylcholine receptors (nAChR) and thus inhibit them. This Conus quercinus (Oak cone) protein is Putative alpha-conotoxin Qc alphaL-1.